Consider the following 373-residue polypeptide: Anhydro-N-acetylmuramic acid kinase (373 aa).

Residue 12 to 19 participates in ATP binding; that stretch reads GTSLDGVD.

The protein belongs to the anhydro-N-acetylmuramic acid kinase family.

The catalysed reaction is 1,6-anhydro-N-acetyl-beta-muramate + ATP + H2O = N-acetyl-D-muramate 6-phosphate + ADP + H(+). The protein operates within amino-sugar metabolism; 1,6-anhydro-N-acetylmuramate degradation. Its pathway is cell wall biogenesis; peptidoglycan recycling. Its function is as follows. Catalyzes the specific phosphorylation of 1,6-anhydro-N-acetylmuramic acid (anhMurNAc) with the simultaneous cleavage of the 1,6-anhydro ring, generating MurNAc-6-P. Is required for the utilization of anhMurNAc either imported from the medium or derived from its own cell wall murein, and thus plays a role in cell wall recycling. This chain is Anhydro-N-acetylmuramic acid kinase, found in Salmonella dublin (strain CT_02021853).